The chain runs to 277 residues: MARSDVLVSTDWAESNLKAPKTVFVEVDEDTSAYDTGHIEGAVKLDWKTDLQDPIRRDFVDAQQFSKLLSERGIANDDTVILYGGNNNWFAAYAYWYFKLYGHQDVKLLDGGRKKWELDARPLSAEKVERPQTSYTAKEPDNSIRAFRDEVIAAIGTKNLVDVRSPDEFSGKILAPAHLPQEQSQRPGHIPGAINVPWSKAANEDGTFKSDEELAKLYAEAGLDGEKETIAYCRIGERSSHTWFVLQELLGHKNVKNYDGSWTEYGSLVGAPIELGS.

2 consecutive Rhodanese domains span residues 18–125 (KAPK…PLSA) and 154–274 (AIGT…APIE). An Isoglutamyl lysine isopeptide (Lys-Gln) (interchain with Q-Cter in protein Pup) cross-link involves residue lysine 67. The active-site Cysteine persulfide intermediate is the cysteine 233. A substrate-binding site is contributed by arginine 238.

The catalysed reaction is thiosulfate + hydrogen cyanide = thiocyanate + sulfite + 2 H(+). Functionally, may be a sulfotransferase involved in the formation of thiosulfate. The polypeptide is Putative thiosulfate sulfurtransferase (Mycolicibacterium smegmatis (strain ATCC 700084 / mc(2)155) (Mycobacterium smegmatis)).